Consider the following 269-residue polypeptide: Ubiquinone/menaquinone biosynthesis C-methyltransferase UbiE (269 aa).

Residues threonine 92, aspartate 113, and 141-142 (NA) contribute to the S-adenosyl-L-methionine site.

The protein belongs to the class I-like SAM-binding methyltransferase superfamily. MenG/UbiE family.

The enzyme catalyses a 2-demethylmenaquinol + S-adenosyl-L-methionine = a menaquinol + S-adenosyl-L-homocysteine + H(+). It catalyses the reaction a 2-methoxy-6-(all-trans-polyprenyl)benzene-1,4-diol + S-adenosyl-L-methionine = a 5-methoxy-2-methyl-3-(all-trans-polyprenyl)benzene-1,4-diol + S-adenosyl-L-homocysteine + H(+). The protein operates within quinol/quinone metabolism; menaquinone biosynthesis; menaquinol from 1,4-dihydroxy-2-naphthoate: step 2/2. Its pathway is cofactor biosynthesis; ubiquinone biosynthesis. Its function is as follows. Methyltransferase required for the conversion of demethylmenaquinol (DMKH2) to menaquinol (MKH2) and the conversion of 2-polyprenyl-6-methoxy-1,4-benzoquinol (DDMQH2) to 2-polyprenyl-3-methyl-6-methoxy-1,4-benzoquinol (DMQH2). The chain is Ubiquinone/menaquinone biosynthesis C-methyltransferase UbiE from Brucella suis biovar 1 (strain 1330).